Here is a 226-residue protein sequence, read N- to C-terminus: Isoprenyl transferase (226 aa).

Residue aspartate 12 is part of the active site. Aspartate 12 contributes to the Mg(2+) binding site. Substrate-binding positions include 13-16 (GNAR), tryptophan 17, lysine 25, histidine 29, and 57-59 (SSE). Asparagine 60 serves as the catalytic Proton acceptor. Substrate contacts are provided by residues tryptophan 61, arginine 63, arginine 174, and 180 to 182 (RIS). Glutamate 193 contacts Mg(2+).

This sequence belongs to the UPP synthase family. As to quaternary structure, homodimer. Mg(2+) serves as cofactor.

Functionally, catalyzes the condensation of isopentenyl diphosphate (IPP) with allylic pyrophosphates generating different type of terpenoids. The chain is Isoprenyl transferase from Rickettsia typhi (strain ATCC VR-144 / Wilmington).